The sequence spans 396 residues: tRNA (guanine-N(7)-)-methyltransferase non-catalytic subunit wuho (396 aa).

4 WD repeats span residues 75-115 (KVEV…AQLL), 162-201 (GHLS…DIHS), 205-243 (GHKE…ELLL), and 302-342 (AGTW…RASG).

Belongs to the WD repeat TRM82 family. Forms a heterodimer with the catalytic subunit Mettl1. Interacts with mei-P26 and weakly interacts with bgcn; required for the function or formation of the mei-P26-bgcn-bam-sxl complex. Interacts with nanos; may be involved in mei-P26-dependent derepression of the BMP signaling pathway. Interacts with Myc; the interaction may be mediated by mei-P26 and may be involved in the regulation of ribosome biogenesis. As to expression, in testis, it is present at high level in hub cells, a niche for germline stem cells of testis. Ubiquitously expressed in all testicular cells throughout spermatogenesis. Ubiquitously expressed in all germline and somatic cells of the ovary.

The protein localises to the nucleus. It localises to the cytoplasm. The protein operates within tRNA modification; N(7)-methylguanine-tRNA biosynthesis. Functionally, required for the Mettl1-dependent formation of N(7)-methylguanine at position 46 (m7G46) in tRNA. In the Mettl1-wuho methyltransferase complex, it is required to stabilize and induce conformational changes of the catalytic subunit. Required for binding of nanos mRNA and repression of translation by the mei-P26-bgcn-bam-sxl complex. May cooperate with mei-P26 and nanos to derepress the BMP signaling pathway. May cooperate with mei-P26 to suppress expression of a subset of microRNAs. May cooperate with mei-P26 to regulate bam expression levels in germline cells during gametogenesis. Required to promote mitosis to meiosis transition during gametogenesis. May regulate germline cell division in part by regulating ribosome biogenesis. This is tRNA (guanine-N(7)-)-methyltransferase non-catalytic subunit wuho from Drosophila pseudoobscura pseudoobscura (Fruit fly).